The following is a 131-amino-acid chain: UPF0146 protein PYRAB01940 (131 aa).

This sequence belongs to the UPF0146 family.

The sequence is that of UPF0146 protein PYRAB01940 from Pyrococcus abyssi (strain GE5 / Orsay).